A 214-amino-acid chain; its full sequence is Adenylate kinase (214 aa).

An ATP-binding site is contributed by 10 to 15 (GAGKGT). The interval 30 to 59 (STGDMLRGAIKAGTDLGKQAKTLMDAGQLV) is NMP. AMP contacts are provided by residues T31, R36, 57–59 (QLV), 85–88 (GFPR), and Q92. Residues 122–159 (GRRVHQASGRTYHVVYNPPKVEGKDDVTGEDLIIRADD) are LID. Residues R123 and 132–133 (TY) contribute to the ATP site. AMP contacts are provided by R156 and R167. K200 provides a ligand contact to ATP.

This sequence belongs to the adenylate kinase family. As to quaternary structure, monomer.

Its subcellular location is the cytoplasm. The catalysed reaction is AMP + ATP = 2 ADP. It functions in the pathway purine metabolism; AMP biosynthesis via salvage pathway; AMP from ADP: step 1/1. In terms of biological role, catalyzes the reversible transfer of the terminal phosphate group between ATP and AMP. Plays an important role in cellular energy homeostasis and in adenine nucleotide metabolism. The polypeptide is Adenylate kinase (Pasteurella multocida (strain Pm70)).